A 440-amino-acid chain; its full sequence is Microtubule-associated tumor suppressor 1 homolog A (440 aa).

The disordered stretch occupies residues 44-67 (KSRTNSKNPQPPTNGQPDLVPPES). Positions 69–401 (SRNVEYYKAQ…RLSMENEELL (333 aa)) form a coiled coil. The interval 407–440 (GDLNSPRKISPSPSLNLQSPRTSGMFSSPPVSPR) is disordered. Polar residues predominate over residues 417–432 (PSPSLNLQSPRTSGMF).

Belongs to the MTUS1 family. In terms of assembly, homodimer.

It is found in the mitochondrion. It localises to the golgi apparatus. Its subcellular location is the cell membrane. The protein localises to the nucleus. Its function is as follows. May inhibit cell proliferation. This chain is Microtubule-associated tumor suppressor 1 homolog A (mtus1a), found in Danio rerio (Zebrafish).